Reading from the N-terminus, the 240-residue chain is FMN-dependent NADH:quinone oxidoreductase 2 (240 aa).

Residues S10 and 23–25 (SIS) each bind FMN.

This sequence belongs to the azoreductase type 1 family. Homodimer. FMN serves as cofactor.

The enzyme catalyses 2 a quinone + NADH + H(+) = 2 a 1,4-benzosemiquinone + NAD(+). It catalyses the reaction N,N-dimethyl-1,4-phenylenediamine + anthranilate + 2 NAD(+) = 2-(4-dimethylaminophenyl)diazenylbenzoate + 2 NADH + 2 H(+). Quinone reductase that provides resistance to thiol-specific stress caused by electrophilic quinones. Functionally, also exhibits azoreductase activity. Catalyzes the reductive cleavage of the azo bond in aromatic azo compounds to the corresponding amines. The chain is FMN-dependent NADH:quinone oxidoreductase 2 from Idiomarina loihiensis (strain ATCC BAA-735 / DSM 15497 / L2-TR).